The following is a 157-amino-acid chain: Ribosome maturation factor RimP (157 aa).

Belongs to the RimP family.

Its subcellular location is the cytoplasm. Its function is as follows. Required for maturation of 30S ribosomal subunits. The chain is Ribosome maturation factor RimP from Helicobacter hepaticus (strain ATCC 51449 / 3B1).